Here is a 173-residue protein sequence, read N- to C-terminus: Adenine phosphoribosyltransferase (173 aa).

It belongs to the purine/pyrimidine phosphoribosyltransferase family. Homodimer.

The protein localises to the cytoplasm. The enzyme catalyses AMP + diphosphate = 5-phospho-alpha-D-ribose 1-diphosphate + adenine. It functions in the pathway purine metabolism; AMP biosynthesis via salvage pathway; AMP from adenine: step 1/1. Functionally, catalyzes a salvage reaction resulting in the formation of AMP, that is energically less costly than de novo synthesis. The polypeptide is Adenine phosphoribosyltransferase (Methanococcus vannielii (strain ATCC 35089 / DSM 1224 / JCM 13029 / OCM 148 / SB)).